The sequence spans 172 residues: Protein GrpE (172 aa).

The segment at 1–24 (MNQDHPEFDSEDLAQNPPETDPLK) is disordered.

The protein belongs to the GrpE family. Homodimer.

The protein localises to the cytoplasm. Functionally, participates actively in the response to hyperosmotic and heat shock by preventing the aggregation of stress-denatured proteins, in association with DnaK and GrpE. It is the nucleotide exchange factor for DnaK and may function as a thermosensor. Unfolded proteins bind initially to DnaJ; upon interaction with the DnaJ-bound protein, DnaK hydrolyzes its bound ATP, resulting in the formation of a stable complex. GrpE releases ADP from DnaK; ATP binding to DnaK triggers the release of the substrate protein, thus completing the reaction cycle. Several rounds of ATP-dependent interactions between DnaJ, DnaK and GrpE are required for fully efficient folding. This chain is Protein GrpE, found in Xanthomonas oryzae pv. oryzae (strain PXO99A).